The chain runs to 478 residues: Nuclear distribution protein PAC1 (478 aa).

One can recognise a LisH domain in the interval 9–41; it reads QAEELHKAMIAYLLSANLPKSAAALREELADSV. A coiled-coil region spans residues 60–87; sequence TSVVRLQKKIMDLESRNNALQSELDSAT. WD repeat units lie at residues 113-154, 156-196, 200-247, 250-289, 292-352, 354-393, 398-439, and 440-477; these read SHRE…RTIK, HTKA…KNIR, GHDH…CVKT, GHVDWVRDVAASPDGRFLFSAGNDQVARLWDVSSGETKST, GHEH…IKTL, GHDNWVRALAFHPGGKYLLSVSDDKTLRCWDLTQECKCVR, AHGH…AASA, and INGVVPTGKKEDPGGGPMMGIRCVIATGSVDLKVRVFA.

This sequence belongs to the WD repeat LIS1/nudF family. As to quaternary structure, self-associates. Interacts with NDL1 and dynein.

Its subcellular location is the cytoplasm. The protein resides in the cytoskeleton. It is found in the spindle pole. Its function is as follows. Positively regulates the activity of the minus-end directed microtubule motor protein dynein. May enhance dynein-mediated microtubule sliding by targeting dynein to the microtubule plus end. Required for nuclear migration during vegetative growth as well as development. Required for retrograde early endosome (EE) transport from the hyphal tip. Required for localization of dynein to the mitotic spindle poles. Recruits additional proteins to the dynein complex at SPBs. This is Nuclear distribution protein PAC1 from Paracoccidioides brasiliensis (strain Pb18).